Consider the following 793-residue polypeptide: MEARVERAVQKRQVLFLCVFLGMSWAGAEPLRYFVAEETERGTFLTNLAKDLGLGVGELRARGTRIVSDQNMQILLLSSLTGDLLLNEKLDREELCGPREPCVLPFQLLLEKPFQIFRAELWVRDINDHAPVFLDREISLKILESTTPGAAFLLESAQDSDVGTNSLSNYTISPNAYFHINVHDSGEGNIYPELVLNQVLDREEIPEFSLTLTALDGGSPPRSGTALVRILVLDVNDNAPDFVRSLYKVQVPENSPVGSMVVSVSARDLDTGSNGEIAYAFSYATERILKTFQINPTSGSLHLKAQLDYEAIQTYTLTIQAKDGGGLSGKCTVVVDVTDINDNRPELLLSSLTSPIAENSPETVVAVFRIRDRDSGNNGKTVCSIQDDVPFILKPSVENFYTLVTEKPLDRERNTEYNITITVTDLGTPRLKTEHNITVLVSDVNDNAPAFTQTSYTLFVRENNSPALPIGSVSATDRDSGTNAQVIYSLLPSQDPHLPLASLVSINADNGHLFALRSLDYEALQAFEFRVGATDRGSPALSSEALVRVLVLDANDNSPFVLYPLQNSSAPCTEPLPRAAEPGYLVTKVVAVDGDSGQNAWLSYQLLKATEPGLFGVWAHNGEVRTARLLSERDAAKQRLVVLVKDNGEPPRSATATLHVLLVDGFSQPYLRLPEAAPDQANSLTVYLVVALASVSSLFLLSVLLFVAVRLCRRSRAAPVGRCSVPEGPFPRHLVDLSGTGTLSQSYQYEVCLTGGSGTNEFKFLKPIIPNLLPQSTGREVEENRPFQNNLGF.

The signal sequence occupies residues 1 to 26 (MEARVERAVQKRQVLFLCVFLGMSWA). Residues 27–688 (GAEPLRYFVA…DQANSLTVYL (662 aa)) lie on the Extracellular side of the membrane. 5 consecutive Cadherin domains span residues 35 to 133 (VAEE…APVF), 138 to 242 (ISLK…APDF), 247 to 347 (YKVQ…RPEL), 352 to 451 (LTSP…APAF), and 456 to 561 (YTLF…SPFV). N-linked (GlcNAc...) asparagine glycosylation is present at Asn169. N-linked (GlcNAc...) asparagine glycosylation is found at Asn418 and Asn436. The N-linked (GlcNAc...) asparagine glycan is linked to Asn567. The 104-residue stretch at 568 to 671 (SSAPCTEPLP…LVDGFSQPYL (104 aa)) folds into the Cadherin 6 domain. Residues 689 to 709 (VVALASVSSLFLLSVLLFVAV) traverse the membrane as a helical segment. The Cytoplasmic segment spans residues 710–793 (RLCRRSRAAP…NRPFQNNLGF (84 aa)).

The protein localises to the cell membrane. In terms of biological role, potential calcium-dependent cell-adhesion protein. May be involved in the establishment and maintenance of specific neuronal connections in the brain. The chain is Protocadherin beta-7 (PCDHB7) from Homo sapiens (Human).